Reading from the N-terminus, the 914-residue chain is Thyroid peroxidase (914 aa).

Positions 1–31 are cleaved as a signal peptide; the sequence is MRTLGAMAVMLVVMGTAIFLPFLLRSRDILG. At 32–834 the chain is on the extracellular side; sequence GKTMTSHVIS…TCIDSGRLPR (803 aa). Asn123 carries N-linked (GlcNAc...) asparagine glycosylation. Cys136 and Cys152 are disulfide-bonded. Residue Asp232 coordinates heme b. The active-site Proton acceptor is His233. Asp234 contributes to the Ca(2+) binding site. Cystine bridges form between Cys253-Cys263 and Cys257-Cys278. Residues Asn271 and Asn299 are each glycosylated (N-linked (GlcNAc...) asparagine). Ca(2+)-binding residues include Thr313, Phe315, Asp317, and Ser319. N-linked (GlcNAc...) asparagine glycosylation occurs at Asn334. Positions 387 and 482 each coordinate heme b. 7 disulfide bridges follow: Cys586-Cys643, Cys684-Cys709, Cys730-Cys770, Cys756-Cys782, Cys788-Cys802, Cys796-Cys811, and Cys813-Cys826. N-linked (GlcNAc...) asparagine glycosylation occurs at Asn603. The Sushi domain maps to 728-783; the sequence is DKCVFPEKVDNGNFVHCEESGKLVLVYSCFHGYKLQGQEQVTCTQNGWDSEPPVCK. Residues 784-827 form the EGF-like; calcium-binding domain; sequence DVNECADLTHPPCHSSAKCKNTKGSFQCVCTDPYMLGEDEKTCI. A helical membrane pass occupies residues 835-859; it reads ASWVSIALGALLIGGLASLSWTVIC. At 860–914 the chain is on the cytoplasmic side; it reads RWTHADKKSTLLITERVTMESGFRKSQESGISPQKAEVQDAEQEPAYGSRVLLCE. The disordered stretch occupies residues 882–907; sequence FRKSQESGISPQKAEVQDAEQEPAYG.

This sequence belongs to the peroxidase family. XPO subfamily. As to quaternary structure, interacts with DUOX1, DUOX2 and CYBA. It depends on Ca(2+) as a cofactor. The cofactor is heme b. In terms of processing, heme is covalently bound through a H(2)O(2)-dependent autocatalytic process. Heme insertion is important for the delivery of protein at the cell surface. Post-translationally, cleaved in its N-terminal part.

It localises to the membrane. The enzyme catalyses 2 iodide + H2O2 + 2 H(+) = diiodine + 2 H2O. The catalysed reaction is [thyroglobulin]-L-tyrosine + iodide + H2O2 + H(+) = [thyroglobulin]-3-iodo-L-tyrosine + 2 H2O. It carries out the reaction [thyroglobulin]-3-iodo-L-tyrosine + iodide + H2O2 + H(+) = [thyroglobulin]-3,5-diiodo-L-tyrosine + 2 H2O. It catalyses the reaction 2 [thyroglobulin]-3,5-diiodo-L-tyrosine + H2O2 = [thyroglobulin]-L-thyroxine + [thyroglobulin]-dehydroalanine + 2 H2O. The enzyme catalyses [thyroglobulin]-3-iodo-L-tyrosine + [thyroglobulin]-3,5-diiodo-L-tyrosine + H2O2 = [thyroglobulin]-3,3',5-triiodo-L-thyronine + [thyroglobulin]-dehydroalanine + 2 H2O. Its pathway is hormone biosynthesis; thyroid hormone biosynthesis. In terms of biological role, iodination and coupling of the hormonogenic tyrosines in thyroglobulin to yield the thyroid hormones T(3) and T(4). This chain is Thyroid peroxidase (Tpo), found in Rattus norvegicus (Rat).